The following is an 87-amino-acid chain: GGADVFADNCSTCHVNGGNVISAGKVLSKTAIEEYLDGGYTKEAIEYQVRNGKGPMPAWEGVLSEDEIVAVTDYVYTQAGGAWANVS.

Cys-10, Cys-13, His-14, and Met-56 together coordinate heme c.

This sequence belongs to the cytochrome c family. PetJ subfamily. In terms of assembly, monomer. Binds 1 heme c group covalently per subunit.

Its subcellular location is the plastid. It localises to the chloroplast thylakoid lumen. Functions as an electron carrier between membrane-bound cytochrome b6-f and photosystem I in oxygenic photosynthesis. The polypeptide is Cytochrome c6 (petJ) (Euglena gracilis).